Here is a 375-residue protein sequence, read N- to C-terminus: Succinyl-diaminopimelate desuccinylase (375 aa).

Zn(2+) is bound at residue histidine 66. Residue aspartate 68 is part of the active site. A Zn(2+)-binding site is contributed by aspartate 99. Residue glutamate 133 is the Proton acceptor of the active site. 3 residues coordinate Zn(2+): glutamate 134, glutamate 162, and histidine 348.

It belongs to the peptidase M20A family. DapE subfamily. In terms of assembly, homodimer. Requires Zn(2+) as cofactor. The cofactor is Co(2+).

It carries out the reaction N-succinyl-(2S,6S)-2,6-diaminopimelate + H2O = (2S,6S)-2,6-diaminopimelate + succinate. It participates in amino-acid biosynthesis; L-lysine biosynthesis via DAP pathway; LL-2,6-diaminopimelate from (S)-tetrahydrodipicolinate (succinylase route): step 3/3. In terms of biological role, catalyzes the hydrolysis of N-succinyl-L,L-diaminopimelic acid (SDAP), forming succinate and LL-2,6-diaminopimelate (DAP), an intermediate involved in the bacterial biosynthesis of lysine and meso-diaminopimelic acid, an essential component of bacterial cell walls. In Aeromonas hydrophila subsp. hydrophila (strain ATCC 7966 / DSM 30187 / BCRC 13018 / CCUG 14551 / JCM 1027 / KCTC 2358 / NCIMB 9240 / NCTC 8049), this protein is Succinyl-diaminopimelate desuccinylase.